We begin with the raw amino-acid sequence, 653 residues long: DUF21 domain-containing protein At1g55930, chloroplastic (653 aa).

Residues 1–72 (MELDLSVLGR…DFSHRCQFVV (72 aa)) constitute a chloroplast transit peptide. The next 5 helical transmembrane spans lie at 103-123 (GIVL…KVLA), 157-177 (GLIL…ETSI), 208-228 (FLTT…ALVT), 234-254 (IFGE…ILLL), and 280-300 (WLSL…MGIL). Residues 149–335 (VLKVLREQGL…ELSGAIEEEE (187 aa)) enclose the CNNM transmembrane domain. 2 CBS domains span residues 354-415 (MTPL…LLES) and 421-479 (MAHK…IFDE).

The protein resides in the plastid. Its subcellular location is the chloroplast membrane. The sequence is that of DUF21 domain-containing protein At1g55930, chloroplastic (CBSDUFCH2) from Arabidopsis thaliana (Mouse-ear cress).